Here is a 468-residue protein sequence, read N- to C-terminus: Cyclin-dependent kinase 14 (468 aa).

Ser24, Ser77, and Ser94 each carry phosphoserine. A disordered region spans residues 103 to 132 (KTSSAGKESPKVRRHSSPSSPTSPKFGKAD). Ser133 is modified (phosphoserine). Positions 134–418 (YEKLEKLGEG…AQAALSHEYF (285 aa)) constitute a Protein kinase domain. ATP-binding positions include 140-148 (LGEGSYATV) and Lys163. Residue Asp255 is the Proton acceptor of the active site. Positions 448–468 (ESMRAFGKNNSYGKSLSNSKH) are disordered. Residues 455–468 (KNNSYGKSLSNSKH) show a composition bias toward polar residues.

The protein belongs to the protein kinase superfamily. CMGC Ser/Thr protein kinase family. CDC2/CDKX subfamily. Found in a complex with LRP6, CCNY and CAPRIN2 during G2/M stage; CAPRIN2 functions as a scaffold for the complex by binding to CCNY via its N terminus and to CDK14 via its C terminus. Interacts with CCNY; CCNY mediates its recruitment to the plasma membrane and promotes phosphorylation of LRP6. Interacts with CCDN3 and CDKN1A. Interacts with SEPT8. Interacts with 14-3-3 proteina YWHAB, YWHAE, YWHAH and YWHAQ.

It localises to the cell membrane. The protein resides in the cytoplasm. Its subcellular location is the nucleus. The catalysed reaction is L-seryl-[protein] + ATP = O-phospho-L-seryl-[protein] + ADP + H(+). It catalyses the reaction L-threonyl-[protein] + ATP = O-phospho-L-threonyl-[protein] + ADP + H(+). With respect to regulation, serine/threonine-protein kinase activity is promoted by associated cyclins CCDN3 and CCNY and repressed by CDKN1A. Its function is as follows. Serine/threonine-protein kinase involved in the control of the eukaryotic cell cycle, whose activity is controlled by an associated cyclin. Acts as a cell-cycle regulator of Wnt signaling pathway during G2/M phase by mediating the phosphorylation of LRP6 at 'Ser-1490', leading to the activation of the Wnt signaling pathway. Acts as a regulator of cell cycle progression and cell proliferation via its interaction with CCDN3. Phosphorylates RB1 in vitro, however the relevance of such result remains to be confirmed in vivo. May also play a role in meiosis, neuron differentiation and may indirectly act as a negative regulator of insulin-responsive glucose transport. The protein is Cyclin-dependent kinase 14 (CDK14) of Dasypus novemcinctus (Nine-banded armadillo).